The primary structure comprises 419 residues: Protein FAM217A (419 aa).

Disordered stretches follow at residues Met1–Pro60, Lys96–Glu119, Ser236–Leu299, and Lys317–Lys382. A compositionally biased stretch (low complexity) spans Glu7–Ser19. Residues Ser236–Pro251 are compositionally biased toward low complexity. Composition is skewed to polar residues over residues Glu252–Val261 and Asn271–Val281. 2 stretches are compositionally biased toward low complexity: residues Ser282–Ser296 and Pro334–Ala345.

The protein belongs to the FAM217 family.

The polypeptide is Protein FAM217A (Fam217a) (Mus musculus (Mouse)).